Consider the following 419-residue polypeptide: Testin (419 aa).

In terms of domain architecture, PET spans 92–199; that stretch reads MILTNPVAAK…GDVKLPSEMN (108 aa). Disordered regions lie at residues 133–164 and 199–222; these read EKQP…PSKC and NAQG…GSKD. The span at 155-164 shows a compositional bias: basic and acidic residues; it reads PAHDQDPSKC. 3 consecutive LIM zinc-binding domains span residues 232-295, 297-357, and 360-419; these read YSCY…CDSE, PRCA…NHAV, and QGCH…KMMS.

This sequence belongs to the prickle / espinas / testin family. As to quaternary structure, interacts via LIM domain 1 with ZYX. Interacts (via LIM domain 3) with ENAH and VASP. Interacts with ALKBH4, talin, actin, alpha-actinin, GRIP1 and PXN. Interacts (via LIM domain 2) with ACTL7A (via N-terminus). Heterodimer with ACTL7A; the heterodimer interacts with ENAH to form a heterotrimer.

It is found in the cytoplasm. It localises to the cell junction. Its subcellular location is the focal adhesion. Scaffold protein that may play a role in cell adhesion, cell spreading and in the reorganization of the actin cytoskeleton. Plays a role in the regulation of cell proliferation. May act as a tumor suppressor. This is Testin (Tes) from Rattus norvegicus (Rat).